A 323-amino-acid chain; its full sequence is GDP-L-fucose synthase 1 (323 aa).

At A2 the chain carries N-acetylalanine. 23 to 29 contributes to the NADP(+) binding site; it reads GHRGLVG. The Proton donor/acceptor role is filled by Y149. Residues K153, 176–179, and H192 each bind NADP(+); that span reads PTNL. Residues R200, W215, R222, and D282 each coordinate substrate.

Belongs to the NAD(P)-dependent epimerase/dehydratase family. Fucose synthase subfamily. In terms of assembly, binds and stabilizes MUR1. Homodimer. Highly expressed in roots and flowers, less abundant in leaves, stems and siliques.

It carries out the reaction GDP-beta-L-fucose + NADP(+) = GDP-4-dehydro-alpha-D-rhamnose + NADPH + H(+). Its pathway is nucleotide-sugar biosynthesis; GDP-L-fucose biosynthesis via de novo pathway; GDP-L-fucose from GDP-alpha-D-mannose: step 2/2. Catalyzes the two-step NADP-dependent conversion of GDP-4-dehydro-6-deoxy-D-mannose to GDP-fucose, involving an epimerase and a reductase reaction. Not involved in the synthesis of GDP-L-galactose from GDP-D-mannose. This Arabidopsis thaliana (Mouse-ear cress) protein is GDP-L-fucose synthase 1 (GER1).